A 270-amino-acid chain; its full sequence is Small ribosomal subunit protein eS1 (270 aa).

2 disordered regions span residues 1-20 (MAVGKNKGTSKGGKKGSKKK) and 238-270 (GGGKGAEVSTGAAEGGVVVDRPEGYEPPVQESV).

The protein belongs to the eukaryotic ribosomal protein eS1 family. Component of the small ribosomal subunit. Mature ribosomes consist of a small (40S) and a large (60S) subunit. The 40S subunit contains about 33 different proteins and 1 molecule of RNA (18S). The 60S subunit contains about 49 different proteins and 3 molecules of RNA (28S, 5.8S and 5S).

It localises to the cytoplasm. The protein is Small ribosomal subunit protein eS1 of Culex quinquefasciatus (Southern house mosquito).